Reading from the N-terminus, the 688-residue chain is ERI1 exoribonuclease 2 (688 aa).

In terms of domain architecture, Exonuclease spans L37–A226. D41, E43, and D156 together coordinate Mg(2+). The active-site Proton acceptor is the E43. AMP is bound at residue E43. H213 acts as the Proton acceptor in catalysis. H213 is an AMP binding site. Mg(2+) is bound at residue D218. Residues V337–L360 show a composition bias toward polar residues. Disordered regions lie at residues V337–K367 and D523–Q546. Zn(2+)-binding residues include C594, C596, C619, and C631. Residues C594–L640 form a GRF-type zinc finger.

It belongs to the ERI2 family. It depends on Mg(2+) as a cofactor.

This Mus musculus (Mouse) protein is ERI1 exoribonuclease 2 (Eri2).